Reading from the N-terminus, the 591-residue chain is Aspartate--tRNA(Asp/Asn) ligase (591 aa).

Glu-176 lines the L-aspartate pocket. An aspartate region spans residues 200–203 (QLFK). Arg-222 lines the L-aspartate pocket. ATP is bound by residues 222 to 224 (RDE) and Gln-231. Position 450 (His-450) interacts with L-aspartate. Glu-484 lines the ATP pocket. Arg-491 contributes to the L-aspartate binding site. 536–539 (GLDR) contributes to the ATP binding site.

This sequence belongs to the class-II aminoacyl-tRNA synthetase family. Type 1 subfamily. Homodimer.

It is found in the cytoplasm. The enzyme catalyses tRNA(Asx) + L-aspartate + ATP = L-aspartyl-tRNA(Asx) + AMP + diphosphate. In terms of biological role, aspartyl-tRNA synthetase with relaxed tRNA specificity since it is able to aspartylate not only its cognate tRNA(Asp) but also tRNA(Asn). Reaction proceeds in two steps: L-aspartate is first activated by ATP to form Asp-AMP and then transferred to the acceptor end of tRNA(Asp/Asn). The sequence is that of Aspartate--tRNA(Asp/Asn) ligase from Bacillus cereus (strain ATCC 14579 / DSM 31 / CCUG 7414 / JCM 2152 / NBRC 15305 / NCIMB 9373 / NCTC 2599 / NRRL B-3711).